We begin with the raw amino-acid sequence, 100 residues long: Protein SAMBA (100 aa).

The disordered stretch occupies residues 1–40 (MNGASPAHSLVSTTAVAGGGGSSGAAAGLDDFHFPPDIPS).

In terms of assembly, interacts with CDC27B and CYCA2-3. Expressed in embryos, germinating seeds, hypocotyls and pollen grains.

Its function is as follows. Plays an important role in organ size control. Acts as negative regulator of the anaphase-promoting complex/cyclosome (APC/C). Regulates cell proliferation during early development by targeting CYCA2-3 for APC/C-mediated degradation. Required for mitosis I during pollen microspore development. The sequence is that of Protein SAMBA from Arabidopsis thaliana (Mouse-ear cress).